A 158-amino-acid chain; its full sequence is 2-C-methyl-D-erythritol 2,4-cyclodiphosphate synthase (158 aa).

Residues Asp9 and His11 each coordinate a divalent metal cation. Residues 9–11 (DVH) and 35–36 (HS) contribute to the 4-CDP-2-C-methyl-D-erythritol 2-phosphate site. Residue His43 coordinates a divalent metal cation. Residues 57 to 59 (DIG), 62 to 66 (FPDTD), 101 to 107 (AQKPKMA), 133 to 136 (TTTE), Phe140, and Arg143 each bind 4-CDP-2-C-methyl-D-erythritol 2-phosphate.

It belongs to the IspF family. Homotrimer. It depends on a divalent metal cation as a cofactor.

The enzyme catalyses 4-CDP-2-C-methyl-D-erythritol 2-phosphate = 2-C-methyl-D-erythritol 2,4-cyclic diphosphate + CMP. It functions in the pathway isoprenoid biosynthesis; isopentenyl diphosphate biosynthesis via DXP pathway; isopentenyl diphosphate from 1-deoxy-D-xylulose 5-phosphate: step 4/6. In terms of biological role, involved in the biosynthesis of isopentenyl diphosphate (IPP) and dimethylallyl diphosphate (DMAPP), two major building blocks of isoprenoid compounds. Catalyzes the conversion of 4-diphosphocytidyl-2-C-methyl-D-erythritol 2-phosphate (CDP-ME2P) to 2-C-methyl-D-erythritol 2,4-cyclodiphosphate (ME-CPP) with a corresponding release of cytidine 5-monophosphate (CMP). In Bacillus licheniformis (strain ATCC 14580 / DSM 13 / JCM 2505 / CCUG 7422 / NBRC 12200 / NCIMB 9375 / NCTC 10341 / NRRL NRS-1264 / Gibson 46), this protein is 2-C-methyl-D-erythritol 2,4-cyclodiphosphate synthase.